We begin with the raw amino-acid sequence, 400 residues long: Elongation factor Tu (400 aa).

The tr-type G domain occupies 10 to 209; it reads KPHVNIGTIG…EVDNYIPTPE (200 aa). Positions 19 to 26 are G1; it reads GHVDHGKT. Residue 19–26 coordinates GTP; it reads GHVDHGKT. Mg(2+) is bound at residue Thr-26. A G2 region spans residues 60-64; it reads GITIN. Residues 81 to 84 are G3; that stretch reads DCPG. Residues 81 to 85 and 136 to 139 each bind GTP; these read DCPGH and NKCD. Residues 136–139 are G4; it reads NKCD. Positions 174-176 are G5; that stretch reads SAL.

This sequence belongs to the TRAFAC class translation factor GTPase superfamily. Classic translation factor GTPase family. EF-Tu/EF-1A subfamily. As to quaternary structure, monomer.

The protein localises to the cytoplasm. It catalyses the reaction GTP + H2O = GDP + phosphate + H(+). In terms of biological role, GTP hydrolase that promotes the GTP-dependent binding of aminoacyl-tRNA to the A-site of ribosomes during protein biosynthesis. This Ruminiclostridium cellulolyticum (strain ATCC 35319 / DSM 5812 / JCM 6584 / H10) (Clostridium cellulolyticum) protein is Elongation factor Tu.